A 60-amino-acid chain; its full sequence is Large ribosomal subunit protein uL30 (60 aa).

Belongs to the universal ribosomal protein uL30 family. In terms of assembly, part of the 50S ribosomal subunit.

The protein is Large ribosomal subunit protein uL30 of Cutibacterium acnes (strain DSM 16379 / KPA171202) (Propionibacterium acnes).